Here is a 137-residue protein sequence, read N- to C-terminus: Cytochrome c2 (137 aa).

An N-terminal signal peptide occupies residues 1–21 (MKISLTAATVAALVLAAPAFA). Residues Cys34, Cys37, His38, and Met117 each coordinate heme c.

The protein belongs to the cytochrome c family. Post-translationally, binds 1 heme c group covalently per subunit.

Its function is as follows. Cytochrome c2 is found mainly in purple, non-sulfur, photosynthetic bacteria where it functions as the electron donor to the oxidized bacteriochlorophyll in the photophosphorylation pathway. However, it may also have a role in the respiratory chain and is found in some non-photosynthetic bacteria. The sequence is that of Cytochrome c2 (cycA) from Rhodobacter capsulatus (strain ATCC BAA-309 / NBRC 16581 / SB1003).